The sequence spans 518 residues: 2-isopropylmalate synthase (518 aa).

Residues 4-266 form the Pyruvate carboxyltransferase domain; that stretch reads INVFDTTLRD…DSSLNLHELK (263 aa). 4 residues coordinate Mn(2+): D13, H201, H203, and N237. Residues 391–518 are regulatory domain; that stretch reads EFLSLQVHYG…GLKRQTAVGS (128 aa).

It belongs to the alpha-IPM synthase/homocitrate synthase family. LeuA type 1 subfamily. In terms of assembly, homodimer. The cofactor is Mn(2+).

Its subcellular location is the cytoplasm. It carries out the reaction 3-methyl-2-oxobutanoate + acetyl-CoA + H2O = (2S)-2-isopropylmalate + CoA + H(+). It participates in amino-acid biosynthesis; L-leucine biosynthesis; L-leucine from 3-methyl-2-oxobutanoate: step 1/4. Catalyzes the condensation of the acetyl group of acetyl-CoA with 3-methyl-2-oxobutanoate (2-ketoisovalerate) to form 3-carboxy-3-hydroxy-4-methylpentanoate (2-isopropylmalate). In Bacillus velezensis (strain DSM 23117 / BGSC 10A6 / LMG 26770 / FZB42) (Bacillus amyloliquefaciens subsp. plantarum), this protein is 2-isopropylmalate synthase.